Here is a 714-residue protein sequence, read N- to C-terminus: Fatty acid oxidation complex subunit alpha (714 aa).

The segment at 1 to 190 is enoyl-CoA hydratase; sequence MEMTSAFTLN…KLGLVDDVVP (190 aa). The 3-hydroxyacyl-CoA dehydrogenase stretch occupies residues 306-714; that stretch reads APLNSVGILG…FWKTTATDLQ (409 aa).

In the N-terminal section; belongs to the enoyl-CoA hydratase/isomerase family. This sequence in the central section; belongs to the 3-hydroxyacyl-CoA dehydrogenase family. Heterotetramer of two alpha chains (FadJ) and two beta chains (FadI).

The protein resides in the cytoplasm. The enzyme catalyses a (3S)-3-hydroxyacyl-CoA = a (2E)-enoyl-CoA + H2O. The catalysed reaction is a 4-saturated-(3S)-3-hydroxyacyl-CoA = a (3E)-enoyl-CoA + H2O. It catalyses the reaction a (3S)-3-hydroxyacyl-CoA + NAD(+) = a 3-oxoacyl-CoA + NADH + H(+). It carries out the reaction (3S)-3-hydroxybutanoyl-CoA = (3R)-3-hydroxybutanoyl-CoA. The protein operates within lipid metabolism; fatty acid beta-oxidation. Its function is as follows. Catalyzes the formation of a hydroxyacyl-CoA by addition of water on enoyl-CoA. Also exhibits 3-hydroxyacyl-CoA epimerase and 3-hydroxyacyl-CoA dehydrogenase activities. Strongly involved in the anaerobic degradation of long and medium-chain fatty acids in the presence of nitrate and weakly involved in the aerobic degradation of long-chain fatty acids. The polypeptide is Fatty acid oxidation complex subunit alpha (fadJ) (Escherichia coli (strain K12)).